A 524-amino-acid polypeptide reads, in one-letter code: Cytochrome P450 4F11 (524 aa).

Residues 15–37 form a helical membrane-spanning segment; sequence AASPWLLLLLVGGSWLLARVLAW. A 4-hydroxynonenal-conjugated cysteine mark is found at Cys45 and Cys260. Residue His261 is modified to 4-hydroxynonenal-conjugated histidine. Residue Glu328 coordinates heme. His347 bears the 4-hydroxynonenal-conjugated histidine mark. The residue at position 354 (Cys354) is a 4-hydroxynonenal-conjugated cysteine. Lys451 is modified (4-hydroxynonenal-conjugated lysine). Residue Cys468 participates in heme binding.

The protein belongs to the cytochrome P450 family. Heme serves as cofactor. Post-translationally, 4-hydroxynonenal conjugation impairs substrate binding and the long-chain fatty acid omega-monooxygenase activity. In terms of tissue distribution, expressed mainly in human liver, followed by kidney, heart, and skeletal muscle.

It is found in the endoplasmic reticulum membrane. The protein localises to the microsome membrane. It catalyses the reaction an organic molecule + reduced [NADPH--hemoprotein reductase] + O2 = an alcohol + oxidized [NADPH--hemoprotein reductase] + H2O + H(+). The catalysed reaction is an omega-methyl-long-chain fatty acid + reduced [NADPH--hemoprotein reductase] + O2 = an omega-hydroxy-long-chain fatty acid + oxidized [NADPH--hemoprotein reductase] + H2O + H(+). It carries out the reaction dodecanoate + reduced [NADPH--hemoprotein reductase] + O2 = 12-hydroxydodecanoate + oxidized [NADPH--hemoprotein reductase] + H2O + H(+). The enzyme catalyses hexadecanoate + reduced [NADPH--hemoprotein reductase] + O2 = 16-hydroxyhexadecanoate + oxidized [NADPH--hemoprotein reductase] + H2O + H(+). It catalyses the reaction (9Z)-octadecenoate + reduced [NADPH--hemoprotein reductase] + O2 = 18-hydroxy-(9Z)-octadecenoate + oxidized [NADPH--hemoprotein reductase] + H2O + H(+). The catalysed reaction is (5Z,8Z,11Z,14Z)-eicosatetraenoate + reduced [NADPH--hemoprotein reductase] + O2 = 20-hydroxy-(5Z,8Z,11Z,14Z)-eicosatetraenoate + oxidized [NADPH--hemoprotein reductase] + H2O + H(+). It carries out the reaction (4Z,7Z,10Z,13Z,16Z,19Z)-docosahexaenoate + reduced [NADPH--hemoprotein reductase] + O2 = 22-hydroxy-(4Z,7Z,10Z,13Z,16Z,19Z)-docosahexaenoate + oxidized [NADPH--hemoprotein reductase] + H2O + H(+). The enzyme catalyses 8-hydroxy-(5Z,9E,11Z,14Z)-eicosatetraenoate + reduced [NADPH--hemoprotein reductase] + O2 = 8,20-dihydroxy-(5Z,9E,11Z,14Z)-eicosatetraenoate + oxidized [NADPH--hemoprotein reductase] + H2O + H(+). It catalyses the reaction 3-hydroxyhexadecanoate + reduced [NADPH--hemoprotein reductase] + O2 = 3,16-dihydroxyhexadecanoate + oxidized [NADPH--hemoprotein reductase] + H2O + H(+). The catalysed reaction is 3-hydroxyoctadecanoate + reduced [NADPH--hemoprotein reductase] + O2 = 3,18-dihydroxyoctadecanoate + oxidized [NADPH--hemoprotein reductase] + H2O + H(+). It carries out the reaction phylloquinone + reduced [NADPH--hemoprotein reductase] + O2 = omega-hydroxyphylloquinone + oxidized [NADPH--hemoprotein reductase] + H2O + H(+). The enzyme catalyses menaquinone-4 + reduced [NADPH--hemoprotein reductase] + O2 = omega-hydroxymenaquinone-4 + oxidized [NADPH--hemoprotein reductase] + H2O + H(+). It catalyses the reaction 2-hexyl-5-pentylresorcinol + reduced [NADPH--hemoprotein reductase] + O2 = 2-hexyl-5-(5-hydroxypentyl)resorcinol + oxidized [NADPH--hemoprotein reductase] + H2O + H(+). The catalysed reaction is 2-hexyl-5-heptylresorcinol + reduced [NADPH--hemoprotein reductase] + O2 = 2-hexyl-5-(7-hydroxyheptyl)resorcinol + oxidized [NADPH--hemoprotein reductase] + H2O + H(+). It carries out the reaction 12-hydroxy-(5Z,8Z,10E,14Z)-eicosatetraenoate + reduced [NADPH--hemoprotein reductase] + O2 = 12,20-dihydroxy-(5Z,8Z,10E,14Z)-eicosatetraenoate + oxidized [NADPH--hemoprotein reductase] + H2O + H(+). The enzyme catalyses 15-hydroxy-(5Z,8Z,11Z,13E)-eicosatetraenoate + reduced [NADPH--hemoprotein reductase] + O2 = 15,20-dihydroxy-(5Z,8Z,11Z,13E)-eicosatetraenoate + oxidized [NADPH--hemoprotein reductase] + H2O + H(+). It functions in the pathway lipid metabolism; arachidonate metabolism. Its pathway is lipid metabolism; oxylipin biosynthesis. It participates in cofactor degradation; phylloquinone degradation. The protein operates within xenobiotic degradation. Inhibition of the long-chain fatty acid omega-monooxygenase activity by 4-hydroxynonenal (4-HNE) conjugation. In terms of biological role, a cytochrome P450 monooxygenase involved in the metabolism of various endogenous substrates, including fatty acids and their oxygenated derivatives (oxylipins). Mechanistically, uses molecular oxygen inserting one oxygen atom into a substrate, and reducing the second into a water molecule, with two electrons provided by NADPH via cytochrome P450 reductase (CPR; NADPH-ferrihemoprotein reductase). Catalyzes with high efficiency the oxidation of the terminal carbon (omega-oxidation) of 3-hydroxy fatty acids, such as 3-hydroxyhexadecanoic and 3-hydroxyoctadecanoic acids, likely participating in the biosynthesis of long-chain 3-hydroxydicarboxylic acids. Omega-hydroxylates and inactivates phylloquinone (vitamin K1), and menaquinone-4 (MK-4, a form of vitamin K2), both acting as cofactors in blood coagulation. Metabolizes with low efficiciency fatty acids, including (5Z,8Z,11Z,14Z)-eicosatetraenoic acid (arachidonate) and its oxygenated metabolite 8-hydroxyeicosatetraenoic acid (8-HETE). Catalyzes N- and O-demethylation of drugs such as erythromycin, benzphetamine, ethylmorphine, chlorpromazine, imipramine and verapamil. Catalyzes the oxidation of dialkylresorcinol 2. This is Cytochrome P450 4F11 from Homo sapiens (Human).